The following is a 29-amino-acid chain: M-poneritoxin-Ng3d (29 aa).

Expressed by the venom gland.

The protein resides in the secreted. In terms of biological role, has activity against some Gram-positive bacteria and S.cerevisiae. Has a non-hemolytic activity. This chain is M-poneritoxin-Ng3d, found in Neoponera goeldii (Ponerine ant).